Reading from the N-terminus, the 335-residue chain is MVKISVIGSGGWGIALAILLHKNGHNLTIWSFDKKEAEELKINRQNKTKLPNILLPEDIKVTDNLKEAVDNKDILVLAVPSKAIRSVSKSLKDIIKDNQIIVNVAKGLEEDTLKTMTDIIEEELKEKNPQVAVLSGPSHAEEVGKGIPTTCVVSAHNKELTLYLQNIFMNPSFRVYTSPDMIGVEIGGALKNVIALAAGIADGLNYGDNTKAALITRGIKEISSLGVAMGGEQSTFYGLTGLGDLIVTCASMHSRNRRAGILLGQGKTLDEAIKEVNMVVEGIYSAKSALMAAKKYNVEIPIIEQVNAVLFENKNAAEAVNELMIRDKKLEIQSW.

Positions 12 and 106 each coordinate NADPH. Residues K106, G136, and S138 each coordinate sn-glycerol 3-phosphate. NADPH is bound at residue A140. Residues K191, D244, S254, R255, and N256 each contribute to the sn-glycerol 3-phosphate site. Residue K191 is the Proton acceptor of the active site. R255 lines the NADPH pocket. Positions 279 and 281 each coordinate NADPH.

It belongs to the NAD-dependent glycerol-3-phosphate dehydrogenase family.

It localises to the cytoplasm. It carries out the reaction sn-glycerol 3-phosphate + NAD(+) = dihydroxyacetone phosphate + NADH + H(+). It catalyses the reaction sn-glycerol 3-phosphate + NADP(+) = dihydroxyacetone phosphate + NADPH + H(+). The protein operates within membrane lipid metabolism; glycerophospholipid metabolism. Functionally, catalyzes the reduction of the glycolytic intermediate dihydroxyacetone phosphate (DHAP) to sn-glycerol 3-phosphate (G3P), the key precursor for phospholipid synthesis. The sequence is that of Glycerol-3-phosphate dehydrogenase [NAD(P)+] from Fusobacterium nucleatum subsp. nucleatum (strain ATCC 25586 / DSM 15643 / BCRC 10681 / CIP 101130 / JCM 8532 / KCTC 2640 / LMG 13131 / VPI 4355).